Consider the following 146-residue polypeptide: Cell division protein SepF (146 aa).

The protein belongs to the SepF family. As to quaternary structure, homodimer. Interacts with FtsZ.

Its subcellular location is the cytoplasm. Cell division protein that is part of the divisome complex and is recruited early to the Z-ring. Probably stimulates Z-ring formation, perhaps through the cross-linking of FtsZ protofilaments. Its function overlaps with FtsA. This chain is Cell division protein SepF, found in Alkaliphilus oremlandii (strain OhILAs) (Clostridium oremlandii (strain OhILAs)).